Here is a 480-residue protein sequence, read N- to C-terminus: MKVLFAASEGVPFVKTGGLADVIGSLPRHLKSQGFDVRVILPKYSDIPICFREQMLKLTDFMVPLGWRNLYCGIEKLKYDGIIFYFIDNEFYFKRQGLYGFEDDAERFAFFDRAILEVLPRIDFQPNIIHCHDWHTGMISTFLKSHYRNNPFYQDIRTVFTIHNLQYQGVFPRTILQNVLGLGNEYFGLDGLEFYGQVSFMKGGVNYSDILTTVSETYAEEIQLPQYGEQLDGLLRHQKRKLHGILNGIDIDIYNPDTDPHICVNFSRETVDKKHINKESLQKILCLPMRPDVPVFGMVSRLVSQKGLELIGSVLDDILALDVQLVVLGSGEKHYEDMFRSASRRYPDKVSVNIMFGNTLAHRIYAGSDIYLMPSAFEPCGLSQMIALRYGSIPIVRETGGLRDTIQPYNEYTGEGNGFSFTHFNAQDFLYTLKRTISFYRQRNIWSIIVSNAMQCDFSWYKSAQKYQDLYKKLLFNGDR.

Position 15 (Lys15) interacts with ADP-alpha-D-glucose.

The protein belongs to the glycosyltransferase 1 family. Bacterial/plant glycogen synthase subfamily.

The catalysed reaction is [(1-&gt;4)-alpha-D-glucosyl](n) + ADP-alpha-D-glucose = [(1-&gt;4)-alpha-D-glucosyl](n+1) + ADP + H(+). The protein operates within glycan biosynthesis; glycogen biosynthesis. Synthesizes alpha-1,4-glucan chains using ADP-glucose. This is Glycogen synthase from Desulforamulus reducens (strain ATCC BAA-1160 / DSM 100696 / MI-1) (Desulfotomaculum reducens).